The sequence spans 379 residues: Putative acetyl-CoA C-acetyltransferase VraB (379 aa).

Residue Cys-86 is the Acyl-thioester intermediate of the active site. The active-site Proton acceptor is the His-338.

Belongs to the thiolase-like superfamily. Thiolase family.

This chain is Putative acetyl-CoA C-acetyltransferase VraB (vraB), found in Staphylococcus aureus (strain Mu3 / ATCC 700698).